The following is a 376-amino-acid chain: Erythronate-4-phosphate dehydrogenase (376 aa).

Residues Ser-45 and Thr-66 each coordinate substrate. NAD(+) is bound by residues Asp-146 and Thr-175. Arg-209 is an active-site residue. Asp-233 is a binding site for NAD(+). Glu-238 is a catalytic residue. Residue His-255 is the Proton donor of the active site. Gly-258 is a binding site for NAD(+). Tyr-259 provides a ligand contact to substrate.

Belongs to the D-isomer specific 2-hydroxyacid dehydrogenase family. PdxB subfamily. As to quaternary structure, homodimer.

The protein localises to the cytoplasm. The catalysed reaction is 4-phospho-D-erythronate + NAD(+) = (R)-3-hydroxy-2-oxo-4-phosphooxybutanoate + NADH + H(+). It functions in the pathway cofactor biosynthesis; pyridoxine 5'-phosphate biosynthesis; pyridoxine 5'-phosphate from D-erythrose 4-phosphate: step 2/5. Its function is as follows. Catalyzes the oxidation of erythronate-4-phosphate to 3-hydroxy-2-oxo-4-phosphonooxybutanoate. This chain is Erythronate-4-phosphate dehydrogenase, found in Baumannia cicadellinicola subsp. Homalodisca coagulata.